Reading from the N-terminus, the 75-residue chain is uncharacterized protein (75 aa).

A helical membrane pass occupies residues 49–69; that stretch reads VDIVAVATTLPFIVAVICIVF.

It localises to the host membrane. This is an uncharacterized protein from Saccharolobus islandicus (Sulfolobus islandicus).